A 503-amino-acid polypeptide reads, in one-letter code: Inosine-5'-monophosphate dehydrogenase (503 aa).

Residues G20 and S22 each coordinate K(+). CBS domains lie at 103-163 (FVVS…ETKV) and 167-228 (MTPF…LVDS). 261–263 (DSS) contacts NAD(+). K(+) is bound by residues D264, F266, G314, and G316. 312-314 (GIG) serves as a coordination point for NAD(+). Residue S317 coordinates IMP. C319 lines the K(+) pocket. The Thioimidate intermediate role is filled by C319. Residues 358 to 360 (DGG), 381 to 382 (GR), and 405 to 409 (YWGEG) contribute to the IMP site. Catalysis depends on R418, which acts as the Proton acceptor. Residue E431 participates in IMP binding. Residues N460, E485, G486, and G487 each contribute to the K(+) site.

This sequence belongs to the IMPDH/GMPR family. In terms of assembly, homotetramer. K(+) is required as a cofactor.

The protein localises to the cytoplasm. It carries out the reaction IMP + NAD(+) + H2O = XMP + NADH + H(+). It functions in the pathway purine metabolism; XMP biosynthesis via de novo pathway; XMP from IMP: step 1/1. Mycophenolic acid (MPA) is a non-competitive inhibitor that prevents formation of the closed enzyme conformation by binding to the same site as the amobile flap. In contrast, mizoribine monophosphate (MZP) is a competitive inhibitor that induces the closed conformation. MPA is a potent inhibitor of mammalian IMPDHs but a poor inhibitor of the bacterial enzymes. MZP is a more potent inhibitor of bacterial IMPDH. In terms of biological role, catalyzes the conversion of inosine 5'-phosphate (IMP) to xanthosine 5'-phosphate (XMP), the first committed and rate-limiting step in the de novo synthesis of guanine nucleotides, and therefore plays an important role in the regulation of cell growth. Could also have a single-stranded nucleic acid-binding activity and could play a role in RNA and/or DNA metabolism. In Tritrichomonas foetus (Trichomonas foetus), this protein is Inosine-5'-monophosphate dehydrogenase.